A 64-amino-acid chain; its full sequence is Large ribosomal subunit protein bL35 (64 aa).

It belongs to the bacterial ribosomal protein bL35 family.

The protein is Large ribosomal subunit protein bL35 of Streptomyces coelicolor (strain ATCC BAA-471 / A3(2) / M145).